A 635-amino-acid chain; its full sequence is Threonine--tRNA ligase (635 aa).

The segment at 1–152 (MQLLLIHSDY…AKAAVKPEAA (152 aa)) is editing domain. The tract at residues 215–514 (PHVELMRRLE…TEEGKVPMLP (300 aa)) is catalytic. Cys307, His359, and His483 together coordinate Zn(2+).

This sequence belongs to the class-II aminoacyl-tRNA synthetase family. In terms of assembly, homodimer. The cofactor is Zn(2+).

It localises to the cytoplasm. It carries out the reaction tRNA(Thr) + L-threonine + ATP = L-threonyl-tRNA(Thr) + AMP + diphosphate + H(+). Functionally, catalyzes the attachment of threonine to tRNA(Thr) in a two-step reaction: L-threonine is first activated by ATP to form Thr-AMP and then transferred to the acceptor end of tRNA(Thr). Also edits incorrectly charged L-seryl-tRNA(Thr). The protein is Threonine--tRNA ligase of Methanosarcina acetivorans (strain ATCC 35395 / DSM 2834 / JCM 12185 / C2A).